The chain runs to 208 residues: Uridine kinase (208 aa).

11-18 (GGSGSGKT) serves as a coordination point for ATP.

This sequence belongs to the uridine kinase family.

The protein localises to the cytoplasm. The enzyme catalyses uridine + ATP = UMP + ADP + H(+). It carries out the reaction cytidine + ATP = CMP + ADP + H(+). It participates in pyrimidine metabolism; CTP biosynthesis via salvage pathway; CTP from cytidine: step 1/3. Its pathway is pyrimidine metabolism; UMP biosynthesis via salvage pathway; UMP from uridine: step 1/1. The polypeptide is Uridine kinase (Staphylococcus carnosus (strain TM300)).